The following is a 185-amino-acid chain: Ribosome-recycling factor (185 aa).

It belongs to the RRF family.

The protein localises to the cytoplasm. In terms of biological role, responsible for the release of ribosomes from messenger RNA at the termination of protein biosynthesis. May increase the efficiency of translation by recycling ribosomes from one round of translation to another. The protein is Ribosome-recycling factor of Streptococcus uberis (strain ATCC BAA-854 / 0140J).